The chain runs to 376 residues: Putative F-box/FBD/LRR-repeat protein At5g52460 (376 aa).

Residues 16 to 75 (RDEISSLPDDLLIQILLLVPIKDAVGTMILSKRWRYVWTLLPKLEYSDPGDECESVWKFL) enclose the F-box domain. 2 LRR repeats span residues 131–154 (CKTL…VCLP) and 199–224 (FAKV…KFLK). Residues 296–348 (CHGTNQGTVPRCLSAHLDEEFVWHGYRGNEEETQLIRYIFANAKCLKKREIST) enclose the FBD domain.

This chain is Putative F-box/FBD/LRR-repeat protein At5g52460 (EDA41), found in Arabidopsis thaliana (Mouse-ear cress).